The sequence spans 403 residues: RUN domain-containing protein 3B (403 aa).

The interval 1 to 20 (MASRSLGGLSGSRGGGKKSL) is disordered. An Omega-N-methylarginine modification is found at R13. Positions 53 to 185 (DDSSPEFNNF…IDFSFCLKGE (133 aa)) constitute an RUN domain. Residues 207–232 (SDSISSDEEELRTFGSSDSEGSTPEN) are disordered. S211 and S212 each carry phosphoserine. A compositionally biased stretch (polar residues) spans 220–231 (FGSSDSEGSTPE). Positions 296–321 (AHKLEKEQLEYIIVELQDQLKSYQSL) form a coiled coil.

Belongs to the RUNDC3 family. Interacts with RAP2A.

The polypeptide is RUN domain-containing protein 3B (Rundc3b) (Rattus norvegicus (Rat)).